The following is a 106-amino-acid chain: Glutaredoxin-1 (106 aa).

Ala-2 is modified (N-acetylalanine). Residues 3–106 (QAFVNSKIQP…TRLQQIGALK (104 aa)) form the Glutaredoxin domain. Lys-9 is subject to N6-succinyllysine. 2 disulfide bridges follow: Cys-23/Cys-26 and Cys-79/Cys-83.

It belongs to the glutaredoxin family.

The protein localises to the cytoplasm. Functionally, has a glutathione-disulfide oxidoreductase activity in the presence of NADPH and glutathione reductase. Reduces low molecular weight disulfides and proteins. This is Glutaredoxin-1 (GLRX) from Sus scrofa (Pig).